The primary structure comprises 316 residues: 4-hydroxy-3-methylbut-2-enyl diphosphate reductase (316 aa).

[4Fe-4S] cluster is bound at residue Cys-12. (2E)-4-hydroxy-3-methylbut-2-enyl diphosphate is bound by residues His-43 and His-81. 2 residues coordinate dimethylallyl diphosphate: His-43 and His-81. Residues His-43 and His-81 each contribute to the isopentenyl diphosphate site. Cys-103 serves as a coordination point for [4Fe-4S] cluster. Residue His-131 participates in (2E)-4-hydroxy-3-methylbut-2-enyl diphosphate binding. His-131 is a dimethylallyl diphosphate binding site. Residue His-131 coordinates isopentenyl diphosphate. Glu-133 (proton donor) is an active-site residue. Residue Thr-170 participates in (2E)-4-hydroxy-3-methylbut-2-enyl diphosphate binding. Cys-198 contributes to the [4Fe-4S] cluster binding site. The (2E)-4-hydroxy-3-methylbut-2-enyl diphosphate site is built by Ser-226, Asn-228, and Ser-271. The dimethylallyl diphosphate site is built by Ser-226, Asn-228, and Ser-271. 3 residues coordinate isopentenyl diphosphate: Ser-226, Asn-228, and Ser-271.

It belongs to the IspH family. [4Fe-4S] cluster is required as a cofactor.

It carries out the reaction isopentenyl diphosphate + 2 oxidized [2Fe-2S]-[ferredoxin] + H2O = (2E)-4-hydroxy-3-methylbut-2-enyl diphosphate + 2 reduced [2Fe-2S]-[ferredoxin] + 2 H(+). The enzyme catalyses dimethylallyl diphosphate + 2 oxidized [2Fe-2S]-[ferredoxin] + H2O = (2E)-4-hydroxy-3-methylbut-2-enyl diphosphate + 2 reduced [2Fe-2S]-[ferredoxin] + 2 H(+). The protein operates within isoprenoid biosynthesis; dimethylallyl diphosphate biosynthesis; dimethylallyl diphosphate from (2E)-4-hydroxy-3-methylbutenyl diphosphate: step 1/1. It functions in the pathway isoprenoid biosynthesis; isopentenyl diphosphate biosynthesis via DXP pathway; isopentenyl diphosphate from 1-deoxy-D-xylulose 5-phosphate: step 6/6. Functionally, catalyzes the conversion of 1-hydroxy-2-methyl-2-(E)-butenyl 4-diphosphate (HMBPP) into a mixture of isopentenyl diphosphate (IPP) and dimethylallyl diphosphate (DMAPP). Acts in the terminal step of the DOXP/MEP pathway for isoprenoid precursor biosynthesis. The sequence is that of 4-hydroxy-3-methylbut-2-enyl diphosphate reductase from Bacillus mycoides (strain KBAB4) (Bacillus weihenstephanensis).